A 111-amino-acid chain; its full sequence is Secreted RxLR effector protein 82 (111 aa).

Residues 1–17 (MFHLYLLLVFETRYTCL) form the signal peptide. Positions 28-31 (RWLR) match the RxLR motif.

Belongs to the RxLR effector family.

Its subcellular location is the secreted. It is found in the host nucleus. Functionally, secreted effector that acts as an elicitor that induces cell death in host plant cells. This Plasmopara viticola (Downy mildew of grapevine) protein is Secreted RxLR effector protein 82.